Reading from the N-terminus, the 247-residue chain is ATP synthase subunit a, chloroplastic (247 aa).

5 helical membrane-spanning segments follow: residues 38–58 (QVLI…SIAV), 95–115 (VPFI…GALL), 134–154 (INTT…AGLS), 199–219 (LVVV…VMFL), and 220–240 (GLFT…AYIG).

The protein belongs to the ATPase A chain family. In terms of assembly, F-type ATPases have 2 components, CF(1) - the catalytic core - and CF(0) - the membrane proton channel. CF(1) has five subunits: alpha(3), beta(3), gamma(1), delta(1), epsilon(1). CF(0) has four main subunits: a, b, b' and c.

It localises to the plastid. The protein resides in the chloroplast thylakoid membrane. Key component of the proton channel; it plays a direct role in the translocation of protons across the membrane. This is ATP synthase subunit a, chloroplastic from Oenothera argillicola (Appalachian evening primrose).